A 154-amino-acid polypeptide reads, in one-letter code: Large ribosomal subunit protein uL13 (154 aa).

The tract at residues 132-154 (PHEAQQPEVLDVKSMNAKNTRSA) is disordered.

Belongs to the universal ribosomal protein uL13 family. In terms of assembly, part of the 50S ribosomal subunit.

Functionally, this protein is one of the early assembly proteins of the 50S ribosomal subunit, although it is not seen to bind rRNA by itself. It is important during the early stages of 50S assembly. The polypeptide is Large ribosomal subunit protein uL13 (Paracoccus denitrificans (strain Pd 1222)).